The primary structure comprises 99 residues: Protein S100-Z (99 aa).

EF-hand domains follow at residues 13-48 (ITVF…FLMS) and 50-85 (KDPM…LTVA). The Ca(2+) site is built by Ser-20, Glu-23, Asp-25, Lys-28, Glu-33, Asp-63, Asn-65, Asp-67, Glu-69, and Glu-74.

It belongs to the S-100 family. As to quaternary structure, homodimer. Homodimers may assemble into larger stable oligomers. In larva at 5 days post-fertilization, shows very restricted expression only in a few large cells of the olfactory placode. More widely expressed in the adult. Expressed at higher levels in gut than in spleen, head kidney and gill.

The chain is Protein S100-Z from Danio rerio (Zebrafish).